A 245-amino-acid polypeptide reads, in one-letter code: Orotidine 5'-phosphate decarboxylase (245 aa).

Substrate is bound by residues Asp22, Lys44, 71–80, Thr131, Arg192, Gln201, Gly221, and Arg222; that span reads DLKFHDIPNT. Lys73 (proton donor) is an active-site residue.

The protein belongs to the OMP decarboxylase family. Type 1 subfamily. Homodimer.

The enzyme catalyses orotidine 5'-phosphate + H(+) = UMP + CO2. It functions in the pathway pyrimidine metabolism; UMP biosynthesis via de novo pathway; UMP from orotate: step 2/2. Catalyzes the decarboxylation of orotidine 5'-monophosphate (OMP) to uridine 5'-monophosphate (UMP). The protein is Orotidine 5'-phosphate decarboxylase of Klebsiella pneumoniae (strain 342).